A 334-amino-acid polypeptide reads, in one-letter code: Beta-hexosaminidase (334 aa).

Substrate is bound by residues Asp-60, Arg-68, Arg-133, and Lys-163–His-164. The Proton donor/acceptor role is filled by His-176. The Nucleophile role is filled by Asp-247.

It belongs to the glycosyl hydrolase 3 family. NagZ subfamily.

The protein localises to the cytoplasm. The catalysed reaction is Hydrolysis of terminal non-reducing N-acetyl-D-hexosamine residues in N-acetyl-beta-D-hexosaminides.. The protein operates within cell wall biogenesis; peptidoglycan recycling. Plays a role in peptidoglycan recycling by cleaving the terminal beta-1,4-linked N-acetylglucosamine (GlcNAc) from peptide-linked peptidoglycan fragments, giving rise to free GlcNAc, anhydro-N-acetylmuramic acid and anhydro-N-acetylmuramic acid-linked peptides. The sequence is that of Beta-hexosaminidase from Xanthomonas oryzae pv. oryzae (strain KACC10331 / KXO85).